A 316-amino-acid chain; its full sequence is Ribosomal RNA small subunit methyltransferase H (316 aa).

S-adenosyl-L-methionine-binding positions include 35–37 (AGH), aspartate 55, phenylalanine 84, aspartate 105, and glutamine 112.

The protein belongs to the methyltransferase superfamily. RsmH family.

Its subcellular location is the cytoplasm. It catalyses the reaction cytidine(1402) in 16S rRNA + S-adenosyl-L-methionine = N(4)-methylcytidine(1402) in 16S rRNA + S-adenosyl-L-homocysteine + H(+). Its function is as follows. Specifically methylates the N4 position of cytidine in position 1402 (C1402) of 16S rRNA. The sequence is that of Ribosomal RNA small subunit methyltransferase H from Streptococcus pneumoniae (strain ATCC 700669 / Spain 23F-1).